Here is a 420-residue protein sequence, read N- to C-terminus: Serine hydroxymethyltransferase (420 aa).

Residues Leu121 and 125–127 (GHL) contribute to the (6S)-5,6,7,8-tetrahydrofolate site. An N6-(pyridoxal phosphate)lysine modification is found at Lys229.

This sequence belongs to the SHMT family. As to quaternary structure, homodimer. Pyridoxal 5'-phosphate is required as a cofactor.

The protein resides in the cytoplasm. The catalysed reaction is (6R)-5,10-methylene-5,6,7,8-tetrahydrofolate + glycine + H2O = (6S)-5,6,7,8-tetrahydrofolate + L-serine. Its pathway is one-carbon metabolism; tetrahydrofolate interconversion. It functions in the pathway amino-acid biosynthesis; glycine biosynthesis; glycine from L-serine: step 1/1. Catalyzes the reversible interconversion of serine and glycine with tetrahydrofolate (THF) serving as the one-carbon carrier. This reaction serves as the major source of one-carbon groups required for the biosynthesis of purines, thymidylate, methionine, and other important biomolecules. Also exhibits THF-independent aldolase activity toward beta-hydroxyamino acids, producing glycine and aldehydes, via a retro-aldol mechanism. This Aggregatibacter actinomycetemcomitans (Actinobacillus actinomycetemcomitans) protein is Serine hydroxymethyltransferase.